Consider the following 327-residue polypeptide: Plastid lipid-associated protein 1, chloroplastic (327 aa).

A chloroplast-targeting transit peptide spans 1–84; sequence MATTVPLFSQ…WGPEIGLNSS (84 aa). Residues 56 to 78 form a disordered region; it reads VNDEWGPDSKGRGGDVDDEWGPE. Residues 85–107 adopt a coiled-coil conformation; it reads VAEKVAEEAIESAEETERLKRVL.

This sequence belongs to the PAP/fibrillin family. Expressed in anthers, sepals seeds, fruit coats, and leaves. Very low in petals and pistils and not detected in roots.

It localises to the plastid. The protein localises to the chloroplast. Its function is as follows. May modulate the action of carotenoids. The protein is Plastid lipid-associated protein 1, chloroplastic (PAP1) of Brassica campestris (Field mustard).